Consider the following 980-residue polypeptide: Chitin binding domain containing chtb-2 (980 aa).

Residues 1–20 (MRTMHCFLFILLFCLGQVFT) form the signal peptide. N-linked (GlcNAc...) asparagine glycans are attached at residues Asn-187 and Asn-190. Disordered regions lie at residues 310-354 (ERQQ…AELD), 431-451 (QEEE…QIRQ), and 486-512 (EILR…QQEA). 2 N-linked (GlcNAc...) asparagine glycosylation sites follow: Asn-941 and Asn-975.

This chain is Chitin binding domain containing chtb-2, found in Caenorhabditis elegans.